A 435-amino-acid chain; its full sequence is Tungsten-containing formylmethanofuran dehydrogenase 2 subunit B (435 aa).

Selenocysteine 121 is a non-standard amino acid (selenocysteine).

This sequence belongs to the FwdB family. As to quaternary structure, this enzyme is composed of six subunits FwdA, FwdC, FwdD, FwdE, FwdF and FwdG. W-bis(molybdopterin guanine dinucleotide) is required as a cofactor.

It catalyses the reaction N-formylmethanofuran + 2 oxidized [2Fe-2S]-[ferredoxin] + H2O = methanofuran + 2 reduced [2Fe-2S]-[ferredoxin] + CO2 + H(+). It participates in one-carbon metabolism; methanogenesis from CO(2); 5,10-methenyl-5,6,7,8-tetrahydromethanopterin from CO(2): step 1/3. In terms of biological role, catalyzes the reversible oxidation of CO(2) and methanofuran (MFR) to N-formylmethanofuran (CHO-MFR). This enzyme is oxygen-labile. The polypeptide is Tungsten-containing formylmethanofuran dehydrogenase 2 subunit B (fwdB) (Methanocaldococcus jannaschii (strain ATCC 43067 / DSM 2661 / JAL-1 / JCM 10045 / NBRC 100440) (Methanococcus jannaschii)).